A 400-amino-acid chain; its full sequence is Bifunctional enzyme IspD/IspF (400 aa).

A 2-C-methyl-D-erythritol 4-phosphate cytidylyltransferase region spans residues 1–244 (MSHRVLGTER…LLKERDKMDI (244 aa)). The tract at residues 245–400 (RTGNGYDVHR…ALATVTLVRT (156 aa)) is 2-C-methyl-D-erythritol 2,4-cyclodiphosphate synthase. A divalent metal cation-binding residues include Asp-251 and His-253. 4-CDP-2-C-methyl-D-erythritol 2-phosphate is bound by residues 251–253 (DVH) and 277–278 (HS). Residue His-285 coordinates a divalent metal cation. 4-CDP-2-C-methyl-D-erythritol 2-phosphate-binding positions include 299 to 301 (DIG), 375 to 378 (TTSE), Phe-382, and Arg-385.

In the N-terminal section; belongs to the IspD/TarI cytidylyltransferase family. IspD subfamily. This sequence in the C-terminal section; belongs to the IspF family. A divalent metal cation serves as cofactor.

The enzyme catalyses 2-C-methyl-D-erythritol 4-phosphate + CTP + H(+) = 4-CDP-2-C-methyl-D-erythritol + diphosphate. It carries out the reaction 4-CDP-2-C-methyl-D-erythritol 2-phosphate = 2-C-methyl-D-erythritol 2,4-cyclic diphosphate + CMP. The protein operates within isoprenoid biosynthesis; isopentenyl diphosphate biosynthesis via DXP pathway; isopentenyl diphosphate from 1-deoxy-D-xylulose 5-phosphate: step 2/6. It participates in isoprenoid biosynthesis; isopentenyl diphosphate biosynthesis via DXP pathway; isopentenyl diphosphate from 1-deoxy-D-xylulose 5-phosphate: step 4/6. Functionally, bifunctional enzyme that catalyzes the formation of 4-diphosphocytidyl-2-C-methyl-D-erythritol from CTP and 2-C-methyl-D-erythritol 4-phosphate (MEP) (IspD), and catalyzes the conversion of 4-diphosphocytidyl-2-C-methyl-D-erythritol 2-phosphate (CDP-ME2P) to 2-C-methyl-D-erythritol 2,4-cyclodiphosphate (ME-CPP) with a corresponding release of cytidine 5-monophosphate (CMP) (IspF). The protein is Bifunctional enzyme IspD/IspF of Dinoroseobacter shibae (strain DSM 16493 / NCIMB 14021 / DFL 12).